The chain runs to 478 residues: Pyruvate kinase (478 aa).

A substrate-binding site is contributed by Arg-36. Asn-38, Ser-40, and Asp-70 together coordinate K(+). 38–41 (NFSH) is an ATP binding site. The ATP site is built by Arg-77 and Lys-160. Position 225 (Glu-225) interacts with Mg(2+). 3 residues coordinate substrate: Gly-251, Asp-252, and Thr-284. Asp-252 is a binding site for Mg(2+).

It belongs to the pyruvate kinase family. In terms of assembly, homotetramer. Requires Mg(2+) as cofactor. K(+) serves as cofactor.

It carries out the reaction pyruvate + ATP = phosphoenolpyruvate + ADP + H(+). Its pathway is carbohydrate degradation; glycolysis; pyruvate from D-glyceraldehyde 3-phosphate: step 5/5. With respect to regulation, allosterically activated by AMP and by several sugar phosphates. Belongs to type II PK. In Haemophilus influenzae (strain ATCC 51907 / DSM 11121 / KW20 / Rd), this protein is Pyruvate kinase (pykA).